Here is a 303-residue protein sequence, read N- to C-terminus: Probable cell division protein WhiA (303 aa).

Residues 272-303 (SIQQVADALEFPITKSGVNHRLRKINKIADDL) constitute a DNA-binding region (H-T-H motif).

It belongs to the WhiA family.

Functionally, involved in cell division and chromosome segregation. This chain is Probable cell division protein WhiA, found in Streptococcus pyogenes serotype M6 (strain ATCC BAA-946 / MGAS10394).